A 31-amino-acid chain; its full sequence is NLYQFKNMIECAGTRTWIAYVKYGAYTYAYT.

The protein belongs to the phospholipase A2 family. Group I subfamily. Requires Ca(2+) as cofactor. As to expression, expressed by the venom gland.

The protein localises to the secreted. The enzyme catalyses a 1,2-diacyl-sn-glycero-3-phosphocholine + H2O = a 1-acyl-sn-glycero-3-phosphocholine + a fatty acid + H(+). In terms of biological role, snake venom phospholipase A2 (PLA2) that inhibits neuromuscular transmission by blocking acetylcholine release from the nerve termini. PLA2 catalyzes the calcium-dependent hydrolysis of the 2-acyl groups in 3-sn-phosphoglycerides. This Bungarus fasciatus (Banded krait) protein is Basic phospholipase A2 13.